A 421-amino-acid polypeptide reads, in one-letter code: Testin (421 aa).

A PET domain is found at 92 to 199; that stretch reads MILTNPVAAK…GDVKLPCEMD (108 aa). The tract at residues 133 to 164 is disordered; that stretch reads EKQPVAGSEGAQYRKKQLAKQLPAHDQDPSKC. The span at 155–164 shows a compositional bias: basic and acidic residues; it reads PAHDQDPSKC. LIM zinc-binding domains are found at residues 234–297, 299–359, and 362–421; these read YSCY…CDSE, PRCA…NHAV, and QGCH…KRMS.

The protein belongs to the prickle / espinas / testin family. Interacts via LIM domain 1 with ZYX. Interacts (via LIM domain 3) with ENAH and VASP. Interacts with ALKBH4, talin, actin, alpha-actinin, GRIP1 and PXN. Interacts (via LIM domain 2) with ACTL7A (via N-terminus). Heterodimer with ACTL7A; the heterodimer interacts with ENAH to form a heterotrimer.

It localises to the cytoplasm. Its subcellular location is the cell junction. The protein localises to the focal adhesion. Scaffold protein that may play a role in cell adhesion, cell spreading and in the reorganization of the actin cytoskeleton. Plays a role in the regulation of cell proliferation. May act as a tumor suppressor. The protein is Testin (TES) of Pan troglodytes (Chimpanzee).